Here is a 254-residue protein sequence, read N- to C-terminus: MDRVKLTGVVLRAVDYGESDRVVTLLTAERGKVSAFARGARASRRRFGGALEPFTLLSAEVRERSGSDLLGLDSVSVVRGFGALRGDLGRIACAGYAAELARELVRDHQPHDELFELLVAYLDALDAGPPRPAALRAFELGALRAAGLMPRLDACARCGAPVGEGPVRFDAGEGGALCAGCAPGVPRTLPLAAGTLAALLRLQDGGLAAAASEPLAPPAGREAREALTAFLEHHLGRRLAARRFLDEIGPLLGA.

This sequence belongs to the RecO family.

Its function is as follows. Involved in DNA repair and RecF pathway recombination. The chain is DNA repair protein RecO from Anaeromyxobacter sp. (strain K).